The following is a 30-amino-acid chain: Cysteine-rich venom protein okinavin (30 aa).

The tract at residues 1–30 is disordered; it reads SVDFDSESPRKPXIQNEIVDLHNPLRRXVN.

The protein belongs to the CRISP family. Post-translationally, contains 8 disulfide bonds. In terms of tissue distribution, expressed by the venom gland.

It is found in the secreted. Functionally, inhibits calcium-activated potassium channels (KCa), voltage-gated potassium channel (Kv), and the calcium release channel/ryanodine receptor (RyR). The protein is Cysteine-rich venom protein okinavin of Ovophis okinavensis (Ryukyu Island pit viper).